A 329-amino-acid chain; its full sequence is NADH-quinone oxidoreductase subunit H (329 aa).

The next 8 membrane-spanning stretches (helical) occupy residues 11–31 (IVVAILKAIVILLVVVVCGAL), 81–101 (LIFTLAPIVAMSALLMAFAVV), 114–134 (IGLLFFFAMAGLAVYAVLFAG), 154–174 (ISYEVFMALALMGIVAQTGSF), 187–207 (TWFIIPQFLGFCTFFIAGVAV), 238–258 (FFVGEYIGIVLISALLVTLFF), 270–290 (QLSFIWFALKTAFFIMLFILL), and 309–329 (FCLPLTLLNLLVTGAFVLAAQ).

It belongs to the complex I subunit 1 family. NDH-1 is composed of 13 different subunits. Subunits NuoA, H, J, K, L, M, N constitute the membrane sector of the complex.

It localises to the cell inner membrane. It carries out the reaction a quinone + NADH + 5 H(+)(in) = a quinol + NAD(+) + 4 H(+)(out). Its function is as follows. NDH-1 shuttles electrons from NADH, via FMN and iron-sulfur (Fe-S) centers, to quinones in the respiratory chain. The immediate electron acceptor for the enzyme in this species is believed to be ubiquinone. Couples the redox reaction to proton translocation (for every two electrons transferred, four hydrogen ions are translocated across the cytoplasmic membrane), and thus conserves the redox energy in a proton gradient. This subunit may bind ubiquinone. The sequence is that of NADH-quinone oxidoreductase subunit H from Azotobacter vinelandii (strain DJ / ATCC BAA-1303).